The chain runs to 434 residues: Histidinol dehydrogenase (434 aa).

3 residues coordinate NAD(+): Y130, Q188, and N211. 3 residues coordinate substrate: S237, Q259, and H262. Positions 259 and 262 each coordinate Zn(2+). Catalysis depends on proton acceptor residues E326 and H327. H327, D360, E414, and H419 together coordinate substrate. D360 serves as a coordination point for Zn(2+). H419 contributes to the Zn(2+) binding site.

This sequence belongs to the histidinol dehydrogenase family. As to quaternary structure, homodimer. Zn(2+) is required as a cofactor.

It catalyses the reaction L-histidinol + 2 NAD(+) + H2O = L-histidine + 2 NADH + 3 H(+). Its pathway is amino-acid biosynthesis; L-histidine biosynthesis; L-histidine from 5-phospho-alpha-D-ribose 1-diphosphate: step 9/9. In terms of biological role, catalyzes the sequential NAD-dependent oxidations of L-histidinol to L-histidinaldehyde and then to L-histidine. The protein is Histidinol dehydrogenase of Escherichia coli (strain K12).